Reading from the N-terminus, the 290-residue chain is Cbb3-type cytochrome c oxidase subunit FixP (290 aa).

At 1–32 (MTDHSEFDSVSGKTTTGHEWDGIKELNTPLPR) the chain is on the cytoplasmic side. Residues 33–53 (WWVICFYLTIVWAIGYWIVYP) traverse the membrane as a helical segment. Residues 54–290 (AWPLISSNTT…VYVHSLGGGK (237 aa)) are Periplasmic-facing. Cytochrome c domains lie at 109–198 (LARA…RSLS) and 206–287 (YDAA…HSLG). Heme c contacts are provided by C122, C125, H126, M173, C219, C222, H223, and M264.

This sequence belongs to the CcoP / FixP family. As to quaternary structure, component of the cbb3-type cytochrome c oxidase at least composed of FixN, FixO, FixQ and FixP. Requires heme c as cofactor.

It localises to the cell inner membrane. Its pathway is energy metabolism; oxidative phosphorylation. Its function is as follows. C-type cytochrome. Part of the cbb3-type cytochrome c oxidase complex. FixP subunit is required for transferring electrons from donor cytochrome c via its heme groups to FixO subunit. From there, electrons are shuttled to the catalytic binuclear center of FixN subunit where oxygen reduction takes place. The complex also functions as a proton pump. This chain is Cbb3-type cytochrome c oxidase subunit FixP, found in Bradyrhizobium diazoefficiens (strain JCM 10833 / BCRC 13528 / IAM 13628 / NBRC 14792 / USDA 110).